The chain runs to 56 residues: FAAVSVDCSEYPKPDCTLEYRPLCGSDNKTYASKCNFCNAVVESNGTLTLSHFGKC.

Positions 6–56 constitute a Kazal-like domain; the sequence is VDCSEYPKPDCTLEYRPLCGSDNKTYASKCNFCNAVVESNGTLTLSHFGKC. 3 disulfides stabilise this stretch: Cys8–Cys38, Cys16–Cys35, and Cys24–Cys56. Asn45 is a glycosylation site (N-linked (GlcNAc...) asparagine).

It localises to the secreted. The sequence is that of Ovomucoid from Callipepla squamata pallida (Blue scaled quail).